The primary structure comprises 175 residues: NADH-ubiquinone oxidoreductase chain 6 (175 aa).

Transmembrane regions (helical) follow at residues 1 to 21 (MMTYVVFILSIVFVIGLIGSP), 25 to 45 (SPIYGGLGLIVSGGAGCGMVL), 47 to 67 (FGGSFLGLMVFLVYLGGMLVV), 88 to 108 (VVLGAFLLGLMMEFLAVLYVL), 115 to 137 (LVFKFSGLGDWVVYGMSDFGVFS), and 149 to 169 (YGVWLVVVTGWSLFVGVVVIM).

Belongs to the complex I subunit 6 family. In terms of assembly, core subunit of respiratory chain NADH dehydrogenase (Complex I) which is composed of 45 different subunits.

The protein resides in the mitochondrion inner membrane. It catalyses the reaction a ubiquinone + NADH + 5 H(+)(in) = a ubiquinol + NAD(+) + 4 H(+)(out). Core subunit of the mitochondrial membrane respiratory chain NADH dehydrogenase (Complex I) which catalyzes electron transfer from NADH through the respiratory chain, using ubiquinone as an electron acceptor. Essential for the catalytic activity and assembly of complex I. The chain is NADH-ubiquinone oxidoreductase chain 6 (MT-ND6) from Hippopotamus amphibius (Hippopotamus).